Here is a 138-residue protein sequence, read N- to C-terminus: Large ribosomal subunit protein uL16 (138 aa).

It belongs to the universal ribosomal protein uL16 family. In terms of assembly, part of the 50S ribosomal subunit.

Binds 23S rRNA and is also seen to make contacts with the A and possibly P site tRNAs. The protein is Large ribosomal subunit protein uL16 of Chlamydia felis (strain Fe/C-56) (Chlamydophila felis).